We begin with the raw amino-acid sequence, 309 residues long: Homoserine kinase (309 aa).

Residue 91-101 (PIGSGLGSSAC) participates in ATP binding.

Belongs to the GHMP kinase family. Homoserine kinase subfamily.

It is found in the cytoplasm. The catalysed reaction is L-homoserine + ATP = O-phospho-L-homoserine + ADP + H(+). It functions in the pathway amino-acid biosynthesis; L-threonine biosynthesis; L-threonine from L-aspartate: step 4/5. Functionally, catalyzes the ATP-dependent phosphorylation of L-homoserine to L-homoserine phosphate. The polypeptide is Homoserine kinase (Buchnera aphidicola subsp. Acyrthosiphon pisum (strain APS) (Acyrthosiphon pisum symbiotic bacterium)).